The sequence spans 302 residues: Sulfate adenylyltransferase subunit 2 (302 aa).

It belongs to the PAPS reductase family. CysD subfamily. In terms of assembly, heterodimer composed of CysD, the smaller subunit, and CysN.

The enzyme catalyses sulfate + ATP + H(+) = adenosine 5'-phosphosulfate + diphosphate. Its pathway is sulfur metabolism; hydrogen sulfide biosynthesis; sulfite from sulfate: step 1/3. In terms of biological role, with CysN forms the ATP sulfurylase (ATPS) that catalyzes the adenylation of sulfate producing adenosine 5'-phosphosulfate (APS) and diphosphate, the first enzymatic step in sulfur assimilation pathway. APS synthesis involves the formation of a high-energy phosphoric-sulfuric acid anhydride bond driven by GTP hydrolysis by CysN coupled to ATP hydrolysis by CysD. This Shigella dysenteriae serotype 1 (strain Sd197) protein is Sulfate adenylyltransferase subunit 2.